The following is a 145-amino-acid chain: MNQTVYLYTDGACKGNPGAGGWGVLMRYGSHEKELFGGEAQTTNNRMELTAVIEGLKSLKRRCTVIICTDSQYVKNGMENWIHGWKRNGWKTAAKQPVKNDDLWKELDALVGRHQVSWTWVKGHAGHAENERADDLANRGAAQFS.

The region spanning 1–142 is the RNase H type-1 domain; sequence MNQTVYLYTD…ADDLANRGAA (142 aa). Mg(2+)-binding residues include Asp10, Glu48, Asp70, and Asp134.

This sequence belongs to the RNase H family. Monomer. Mg(2+) is required as a cofactor.

Its subcellular location is the cytoplasm. The enzyme catalyses Endonucleolytic cleavage to 5'-phosphomonoester.. In terms of biological role, endonuclease that specifically degrades the RNA of RNA-DNA hybrids. The sequence is that of Ribonuclease HI from Neisseria meningitidis serogroup A / serotype 4A (strain DSM 15465 / Z2491).